Here is a 383-residue protein sequence, read N- to C-terminus: uncharacterized protein (383 aa).

2 disordered regions span residues 27 to 66 (ENNN…NKKP) and 242 to 281 (LITT…ITRR). Composition is skewed to low complexity over residues 28–63 (NNNT…NNNN) and 242–275 (LITT…KSSS).

This is an uncharacterized protein from Dictyostelium discoideum (Social amoeba).